Here is a 1158-residue protein sequence, read N- to C-terminus: Restriction of telomere capping protein 1 (1158 aa).

WD repeat units lie at residues 80–119 (TPQK…KNRL), 125–163 (DHKR…PRPV), 170–214 (HHSD…GVGA), 233–272 (FHSG…SHSV), and 293–342 (AAQD…IPKA). 4 disordered regions span residues 421–529 (GDPV…KSLP), 610–637 (PRFD…KDID), 678–808 (LFGS…IKAP), and 837–909 (KLSP…SSLT). A compositionally biased stretch (basic and acidic residues) spans 425–452 (ADSRDTSFDDTRDDLSHSRSTPPKERPP). Residues 455-471 (RQSTQFTVASLKSQSPV) show a composition bias toward polar residues. Positions 505–526 (SLPRNPSQSTQGSQSSGAAHSK) are enriched in low complexity. 3 stretches are compositionally biased toward basic and acidic residues: residues 610 to 621 (PRFDGQFEDQHT), 681 to 702 (SKER…KEIE), and 735 to 746 (KPGDKSLDRSAL). Polar residues-rich tracts occupy residues 750-765 (APTS…TSDG), 784-800 (NNLS…SQKS), and 840-855 (PSRS…PSSS). The segment covering 890–909 (SFHSNPRSHPSFSSHRSSLT) has biased composition (low complexity). The segment at 1110–1153 (CIYCGEPCRGLTVVVSLNCGHRGHFGCLQEWFLDEQSTGCPGGC) adopts an RING-type; degenerate zinc-finger fold.

Belongs to the WD repeat RTC1 family.

Its subcellular location is the vacuole. In terms of biological role, may be involved in a process influencing telomere capping. The protein is Restriction of telomere capping protein 1 (RTC1) of Clavispora lusitaniae (strain ATCC 42720) (Yeast).